The sequence spans 150 residues: MINSSKINLYSYVCSIFIMSIVVISLICSEALQIQQAKEPFRGHLTRVTIQNYNDYLLAIHCKSRDDDLGFHILAKGELFGWKFHVNFRYSTLCFCGFSQRQINKGVFIIYVASRDFYRCANCTWKAEKDGFHGYGDIPTRGYLFYNWLN.

N-linked (GlcNAc...) asparagine glycosylation occurs at Asn122.

This sequence belongs to the plant self-incompatibility (S1) protein family.

It is found in the secreted. The polypeptide is S-protein homolog 28 (Arabidopsis thaliana (Mouse-ear cress)).